A 340-amino-acid polypeptide reads, in one-letter code: Ferrochelatase (340 aa).

Residues H202 and E283 each contribute to the Fe cation site.

It belongs to the ferrochelatase family.

Its subcellular location is the cytoplasm. The enzyme catalyses heme b + 2 H(+) = protoporphyrin IX + Fe(2+). It participates in porphyrin-containing compound metabolism; protoheme biosynthesis; protoheme from protoporphyrin-IX: step 1/1. Catalyzes the ferrous insertion into protoporphyrin IX. In Acinetobacter baylyi (strain ATCC 33305 / BD413 / ADP1), this protein is Ferrochelatase.